A 432-amino-acid chain; its full sequence is Sphingosine N-acyltransferase-like protein ALT7 (432 aa).

The helical transmembrane segment at 55 to 75 threads the bilayer; that stretch reads IGLSLGSLLLLILMFTCLPYY. An N-linked (GlcNAc...) asparagine glycan is attached at Asn77. Transmembrane regions (helical) follow at residues 91 to 111, 128 to 148, 172 to 192, 226 to 246, 250 to 270, 273 to 293, and 338 to 358; these read FIFS…IYLL, FTEQ…GMYI, GLTK…IVVV, VGNV…FAKL, LGFQ…WLVA, GLYL…MPYG, and AFLG…GMIL. A TLC domain is found at 123–366; that stretch reads KLMVRFTEQG…ILKVAYKVFQ (244 aa). Positions 370 to 395 are disordered; the sequence is ADDTRSDSEESGYGTSDHEGDCYGAQ.

The protein belongs to the sphingosine N-acyltransferase family.

It localises to the membrane. It functions in the pathway mycotoxin biosynthesis. Sphingosine N-acyltransferase-like protein; part of the gene cluster that mediates the biosynthesis of the host-selective toxins (HSTs) AAL-toxins, sphinganine-analog mycotoxins responsible for Alternaria stem canker on tomato by the tomato pathotype. The biosynthesis starts with the polyketide synthase ALT1-catalyzed C-16 carbon chain assembly from one starter acetyl-CoA unit with malonyl-CoA extender units. ALT1 also selectively transfers methyl groups at the first and the third cycle of chain elongation for AAL toxin. The C-16 polyketide chain is released from the enzyme by a nucleophilic attack of a carbanion, which is derived from R-carbon of glycin by decarboxylation, on the carbonyl carbon of polyketide acyl chain. This step is probably catalyzed by a pyridoxal 5'-phosphate-dependent aminoacyl transferase ALT4. The respective functions of the other enzymes encoded by the cluster have still to be elucidated. The sphingosine N-acyltransferase-like protein ALT7 seems not to act as a resistance/self-tolerance factor against the toxin in the toxin biosynthetic gene cluster, contrary to what is expected. The polypeptide is Sphingosine N-acyltransferase-like protein ALT7 (Alternaria alternata (Alternaria rot fungus)).